A 496-amino-acid polypeptide reads, in one-letter code: UDP-N-acetylmuramate--L-alanine ligase (496 aa).

122–128 contributes to the ATP binding site; the sequence is GTHGKTT.

The protein belongs to the MurCDEF family.

The protein localises to the cytoplasm. The catalysed reaction is UDP-N-acetyl-alpha-D-muramate + L-alanine + ATP = UDP-N-acetyl-alpha-D-muramoyl-L-alanine + ADP + phosphate + H(+). It participates in cell wall biogenesis; peptidoglycan biosynthesis. Functionally, cell wall formation. This Mycolicibacterium paratuberculosis (strain ATCC BAA-968 / K-10) (Mycobacterium paratuberculosis) protein is UDP-N-acetylmuramate--L-alanine ligase.